Here is a 249-residue protein sequence, read N- to C-terminus: Derlin-2.2 (249 aa).

Over Met-1–Thr-21 the chain is Cytoplasmic. The helical transmembrane segment at Ala-22 to Leu-42 threads the bilayer. Topologically, residues Asn-43 to Phe-96 are lumenal. Residues Phe-97 to Ile-117 form a helical membrane-spanning segment. Topologically, residues Pro-118–Glu-122 are cytoplasmic. The helical transmembrane segment at Thr-123–Ser-143 threads the bilayer. The Lumenal segment spans residues Lys-144–Ser-152. Residues Phe-153–Ile-173 form a helical membrane-spanning segment. Residues Leu-174 to Gln-249 lie on the Cytoplasmic side of the membrane.

It belongs to the derlin family. In terms of tissue distribution, expressed in roots, stalks, leaves, immature ears, embryo and endosperm.

The protein resides in the endoplasmic reticulum membrane. Functionally, may be involved in the degradation process of specific misfolded endoplasmic reticulum (ER) luminal proteins. The sequence is that of Derlin-2.2 (DER2.2) from Zea mays (Maize).